The following is a 401-amino-acid chain: Alternative oxidase, mitochondrial (401 aa).

The disordered stretch occupies residues 53 to 81 (KRASLSLQPSVREAEKSQGPVVGSEGRGV). Residues 184-204 (LFRIILLESIAGVPGMVGGTL) form a helical membrane-spanning segment. Residues E191, E230, and H233 each coordinate Fe cation. A helical membrane pass occupies residues 249-269 (ALVLAAQGVFYNAFFLTYLIS). Fe cation is bound by residues E281, E282, E335, and H338.

Belongs to the alternative oxidase family. Requires Fe cation as cofactor.

It is found in the mitochondrion inner membrane. In terms of biological role, catalyzes cyanide-resistant oxygen consumption. May increase respiration when the cytochrome respiratory pathway is restricted, or in response to low temperatures. This Cryptococcus neoformans var. grubii serotype A (strain H99 / ATCC 208821 / CBS 10515 / FGSC 9487) (Filobasidiella neoformans var. grubii) protein is Alternative oxidase, mitochondrial (AOX1).